Here is a 108-residue protein sequence, read N- to C-terminus: ATP-dependent Clp protease adapter protein ClpS (108 aa).

A compositionally biased stretch (basic and acidic residues) spans 1-15; the sequence is MPRESSPDSHHEHGV. Residues 1-24 are disordered; that stretch reads MPRESSPDSHHEHGVAVEPARPEV.

This sequence belongs to the ClpS family. As to quaternary structure, binds to the N-terminal domain of the chaperone ClpA.

In terms of biological role, involved in the modulation of the specificity of the ClpAP-mediated ATP-dependent protein degradation. The polypeptide is ATP-dependent Clp protease adapter protein ClpS (Stenotrophomonas maltophilia (strain R551-3)).